The sequence spans 321 residues: uncharacterized protein (321 aa).

The HTH lysR-type domain maps to methionine 1 to threonine 58. The H-T-H motif DNA-binding region spans valine 18–alanine 37.

It belongs to the LysR transcriptional regulatory family.

This is an uncharacterized protein from Mycobacterium tuberculosis (strain CDC 1551 / Oshkosh).